The chain runs to 399 residues: Protein IQ-DOMAIN 25 (399 aa).

The short motif at 1–8 is the Nuclear localization signal element; it reads MRKNLTKL. Calmodulin-binding stretches follow at residues 81–91 and 99–110; these read KERRTHAIAVA and DAAVAAAKAAAA. IQ domains are found at residues 130-158 and 159-181; these read EHRA…GVVK and IQAL…SMEA. Disordered stretches follow at residues 198–219, 262–302, and 346–377; these read NGNA…ENRN, SPLS…SPAR, and LRSH…VRMQ. A compositionally biased stretch (polar residues) spans 285–294; the sequence is KFPTAQSTPR.

Belongs to the IQD family. As to quaternary structure, binds to multiple calmodulin (CaM) in the presence of Ca(2+) and CaM-like proteins.

It is found in the nucleus. It localises to the cell membrane. May be involved in cooperative interactions with calmodulins or calmodulin-like proteins. Recruits calmodulin proteins to microtubules, thus being a potential scaffold in cellular signaling and trafficking. May associate with nucleic acids and regulate gene expression at the transcriptional or post-transcriptional level. The polypeptide is Protein IQ-DOMAIN 25 (Arabidopsis thaliana (Mouse-ear cress)).